The sequence spans 2590 residues: DNA polymerase theta (2590 aa).

Basic residues predominate over residues 1-12; that stretch reads MNLLRRSGKRRR. Positions 1–33 are disordered; it reads MNLLRRSGKRRRSESGSDSFSGSGGDSSASPQF. A compositionally biased stretch (low complexity) spans 16–30; the sequence is GSDSFSGSGGDSSAS. ATP is bound by residues Gln96 and 115-122; that span reads APTSAGKT. The Helicase ATP-binding domain occupies 102-286; that stretch reads LGQVLEGKNL…WLNAELYHTD (185 aa). The segment at 102–554 is helicase activity; it reads LGQVLEGKNL…STSQDMHTYA (453 aa). The DEAH box signature appears at 216–219; the sequence is DELH. The 234-residue stretch at 321 to 554 folds into the Helicase C-terminal domain; sequence GDEDHVVSLC…STSQDMHTYA (234 aa). Residues 847-894 are interaction with RAD51; that stretch reads DEEEEAVEERRNMRTIWVTGRKGLTEREAAALIVEEARMILQQDLVEM. Lys990 bears the N6-acetyllysine mark. A disordered region spans residues 1034–1060; the sequence is KMSRSFRSWKRRKHLKRSRDSSPLKDS. Over residues 1040–1050 the composition is skewed to basic residues; that stretch reads RSWKRRKHLKR. Phosphoserine; by PLK1 is present on residues Ser1289, Ser1482, Ser1486, Ser1488, Ser1493, Ser1555, and Ser1563. Positions 1594 to 1622 are disordered; sequence SDPVLDEHHQGDQDGGDQDERAEKSKLTG. Residues 1598-1619 are compositionally biased toward basic and acidic residues; that stretch reads LDEHHQGDQDGGDQDERAEKSK. 2 positions are modified to phosphoserine; by PLK1: Ser1628 and Ser1635. The residue at position 1755 (Thr1755) is a Phosphothreonine; by PLK1. The tract at residues 1777 to 1797 is disordered; the sequence is PSDIKNHDLSPGSRNGFKDNS. Positions 2097–2584 are DNA polymerase activity; the sequence is AECESQKHIM…KVKIGASWGE (488 aa). 2 loop regions span residues 2142 to 2177 and 2257 to 2322; these read KLPP…GRQF and EIKM…VPFP. Residues Asp2330 and Tyr2331 each coordinate Mg(2+). A loop 3 region spans residues 2491 to 2535; the sequence is QLETFHSTFKSHGHREGMLQSDQTGLSRKRKLQGMFCPIRGGFFI. Residue Asp2540 coordinates Mg(2+).

The protein belongs to the DNA polymerase type-A family. As to quaternary structure, homomultimer; forms homodimers and homotetramers. Interacts with RAD51. Interacts with ORC2 and ORC4. Interacts with RHNO1; interaction takes place during mitosis and promotes POLQ recruitment to DNA damage sites. Interacts (when phosphorylated) with TOPBP1 (via BRCT domains 7 and 8); promoting POLQ recruitment to DNA damage sites. The cofactor is Mg(2+). Post-translationally, phosphorylated by PLK1; promoting interaction with TOPBP1 and recruitment to DNA damage sites. Highly expressed in testis.

The protein localises to the nucleus. It is found in the chromosome. The enzyme catalyses DNA(n) + a 2'-deoxyribonucleoside 5'-triphosphate = DNA(n+1) + diphosphate. The catalysed reaction is ATP + H2O = ADP + phosphate + H(+). Its activity is regulated as follows. Specifically inhibited by the antibiotic novobiocin. The polymerase activity is specifically inhibited by the small molecule ART558. Novobiocin and ART558 confer specific killing of BRCA1/2-deficient cells and synergize with the poly [ADP-ribose] polymerase (PARP) inhibitor olaparib. Its function is as follows. Low-fidelity DNA polymerase with a helicase activity that promotes microhomology-mediated end-joining (MMEJ), an alternative non-homologous end-joining (NHEJ) machinery required to repair double-strand breaks in DNA during mitosis. MMEJ is an error-prone repair pathway that produces deletions of sequences from the strand being repaired and promotes genomic rearrangements, such as telomere fusions, some of them leading to cellular transformation. MMEJ is required during mitosis to repair persistent double-strand breaks that originate in S-phase. Although error-prone, MMEJ protects against chromosomal instability and tumorigenesis. The polymerase acts by binding directly the 2 ends of resected double-strand breaks, allowing microhomologous sequences in the overhangs to form base pairs. It then extends each strand from the base-paired region using the opposing overhang as a template. Requires partially resected DNA containing 2 to 6 base pairs of microhomology to perform MMEJ. The polymerase lacks proofreading activity and is highly promiscuous: unlike most polymerases, promotes extension of ssDNA and partial ssDNA (pssDNA) substrates. When the ends of a break do not contain terminal microhomology must identify embedded complementary sequences through a scanning step. Also acts as a DNA helicase, promoting dissociation of the replication protein A complex (RPA/RP-A), composed of RPA1, RPA2 and RPA3, from resected double-strand breaks to allow their annealing and subsequent joining by MMEJ. Removal of RPA/RP-A complex proteins prevents RAD51 accumulation at resected ends, thereby inhibiting homology-recombination repair (HR) pathway. Also shows RNA-directed DNA polymerase activity to mediate DNA repair in vitro; however this activity needs additional evidence in vivo. May also have lyase activity. Involved in somatic hypermutation of immunoglobulin genes, a process that requires the activity of DNA polymerases to ultimately introduce mutations at both A/T and C/G base pairs. POLQ-mediated end joining activity is involved in random integration of exogenous DNA hampers. The sequence is that of DNA polymerase theta from Homo sapiens (Human).